We begin with the raw amino-acid sequence, 295 residues long: UTP--glucose-1-phosphate uridylyltransferase (295 aa).

Belongs to the UDPGP type 2 family.

The enzyme catalyses alpha-D-glucose 1-phosphate + UTP + H(+) = UDP-alpha-D-glucose + diphosphate. Its function is as follows. May play a role in stationary phase survival. This is UTP--glucose-1-phosphate uridylyltransferase (galU) from Haemophilus ducreyi (strain 35000HP / ATCC 700724).